Consider the following 207-residue polypeptide: Glycerol-3-phosphate acyltransferase (207 aa).

6 helical membrane-spanning segments follow: residues asparagine 8–alanine 28, leucine 64–isoleucine 84, threonine 92–leucine 112, leucine 122–valine 142, serine 154–isoleucine 174, and serine 176–valine 196.

This sequence belongs to the PlsY family. Probably interacts with PlsX.

It localises to the cell inner membrane. It catalyses the reaction an acyl phosphate + sn-glycerol 3-phosphate = a 1-acyl-sn-glycero-3-phosphate + phosphate. Its pathway is lipid metabolism; phospholipid metabolism. Functionally, catalyzes the transfer of an acyl group from acyl-phosphate (acyl-PO(4)) to glycerol-3-phosphate (G3P) to form lysophosphatidic acid (LPA). This enzyme utilizes acyl-phosphate as fatty acyl donor, but not acyl-CoA or acyl-ACP. This is Glycerol-3-phosphate acyltransferase from Aliarcobacter butzleri (strain RM4018) (Arcobacter butzleri).